Here is a 249-residue protein sequence, read N- to C-terminus: Aspartate/glutamate leucyltransferase (249 aa).

Belongs to the R-transferase family. Bpt subfamily.

The protein resides in the cytoplasm. The enzyme catalyses N-terminal L-glutamyl-[protein] + L-leucyl-tRNA(Leu) = N-terminal L-leucyl-L-glutamyl-[protein] + tRNA(Leu) + H(+). It catalyses the reaction N-terminal L-aspartyl-[protein] + L-leucyl-tRNA(Leu) = N-terminal L-leucyl-L-aspartyl-[protein] + tRNA(Leu) + H(+). Functions in the N-end rule pathway of protein degradation where it conjugates Leu from its aminoacyl-tRNA to the N-termini of proteins containing an N-terminal aspartate or glutamate. The polypeptide is Aspartate/glutamate leucyltransferase (Brucella abortus (strain S19)).